A 72-amino-acid chain; its full sequence is Protein kish (72 aa).

The signal sequence occupies residues 1–26; sequence MVAIFNFQSLLVVILLFICTCTYIRG. At 27 to 47 the chain is on the extracellular side; sequence SYPSLLEVRDKHSFSGLPRKA. Residues 48–68 traverse the membrane as a helical segment; sequence AIIGERLSPWVSACCLIMGLW. Residues 69 to 72 are Cytoplasmic-facing; it reads TLYN.

This sequence belongs to the KISH family.

The protein resides in the golgi apparatus membrane. Its function is as follows. Involved in the early part of the secretory pathway. The protein is Protein kish (tmem167) of Dictyostelium discoideum (Social amoeba).